We begin with the raw amino-acid sequence, 213 residues long: Urease accessory protein UreG (213 aa).

12–19 is a GTP binding site; the sequence is GPVGSGKT.

It belongs to the SIMIBI class G3E GTPase family. UreG subfamily. In terms of assembly, homodimer. UreD, UreF and UreG form a complex that acts as a GTP-hydrolysis-dependent molecular chaperone, activating the urease apoprotein by helping to assemble the nickel containing metallocenter of UreC. The UreE protein probably delivers the nickel.

Its subcellular location is the cytoplasm. Facilitates the functional incorporation of the urease nickel metallocenter. This process requires GTP hydrolysis, probably effectuated by UreG. This chain is Urease accessory protein UreG, found in Marinomonas sp. (strain MWYL1).